We begin with the raw amino-acid sequence, 158 residues long: Ankyrin repeat domain-containing protein 37 (158 aa).

ANK repeat units follow at residues 1–25 (MLLL…SVNA), 30–59 (CEQS…DLNQ), and 63–92 (FGEA…QIDL). Residues 129 to 149 (EQPNKDHCVQVLRLKRSFGSE) carry the Nuclear localization signal motif.

Ubiquitinated by the CRL2(FEM1B) complex, leading to its degradation.

Its subcellular location is the nucleus. It is found in the cytoplasm. The polypeptide is Ankyrin repeat domain-containing protein 37 (ANKRD37) (Bos taurus (Bovine)).